Reading from the N-terminus, the 244-residue chain is Homeobox-leucine zipper protein HOX14 (244 aa).

Positions 25–64 (ASGEVQGERPRARRRRRRGARCVGGGGGGGEVDGGDPKKR) are disordered. A compositionally biased stretch (basic residues) spans 35 to 44 (RARRRRRRGA). Over residues 46 to 56 (CVGGGGGGGEV) the composition is skewed to gly residues. Residues 59 to 118 (GDPKKRRLSDEQVEMLELSFREERKLETGRKVHLASELGLDPKQVAVWFQNRRARHKSKL) constitute a DNA-binding region (homeobox). Positions 108–167 (QNRRARHKSKLLEEEFSKLKHAHDAAILHKCHLENEVLRLKERLVVAEEEVRRLRSAAGS) form a coiled coil.

The protein belongs to the HD-ZIP homeobox family. Class I subfamily. In terms of tissue distribution, expressed in roots, stems, leaf blades and panicles.

The protein resides in the nucleus. In terms of biological role, probable transcription factor. The sequence is that of Homeobox-leucine zipper protein HOX14 (HOX14) from Oryza sativa subsp. indica (Rice).